Consider the following 412-residue polypeptide: Heme chaperone HemW (412 aa).

Positions 4–241 (GTYLMPTAAY…RHGQEVLTQA (238 aa)) constitute a Radical SAM core domain. S-adenosyl-L-methionine is bound at residue tyrosine 13. [2Fe-2S] cluster contacts are provided by cysteine 19, cysteine 23, and cysteine 26. S-adenosyl-L-methionine contacts are provided by residues glycine 72, 73 to 74 (GT), glutamate 105, glutamine 132, arginine 144, and aspartate 169.

It belongs to the anaerobic coproporphyrinogen-III oxidase family. HemW subfamily. It depends on [4Fe-4S] cluster as a cofactor.

It is found in the cytoplasm. Functionally, probably acts as a heme chaperone, transferring heme to an unknown acceptor. Binds one molecule of heme per monomer, possibly covalently. Binds 1 [2Fe-2S] cluster. Although this protein has sequence motifs typically found in proteins binding the [4Fe-4S]-AdoMet radical-SAM cluster and S-adenosylmethionine, spectroscopic evidence suggests that a [2Fe-2S] cluster is present; S-adenosylmethionine was not detected. Has no detectable coproporphyrinogen-III oxidase activity. The polypeptide is Heme chaperone HemW (Synechocystis sp. (strain ATCC 27184 / PCC 6803 / Kazusa)).